We begin with the raw amino-acid sequence, 630 residues long: NUAK family SNF1-like kinase 2 (630 aa).

An N-acetylmethionine modification is found at Met1. Residues 57–307 (YEFLETLGKG…LEDVASHWWV (251 aa)) enclose the Protein kinase domain. ATP contacts are provided by residues 63 to 71 (LGKGTYGKV) and Lys85. Asp179 functions as the Proton acceptor in the catalytic mechanism. Thr212 carries the phosphothreonine modification. Disordered regions lie at residues 361 to 504 (HVPG…RLHR) and 521 to 566 (GTAP…LDLP). Over residues 464–476 (SGYYSSPEPSESG) the composition is skewed to low complexity. Ser529, Ser550, Ser553, and Ser579 each carry phosphoserine.

This sequence belongs to the protein kinase superfamily. CAMK Ser/Thr protein kinase family. SNF1 subfamily. It depends on Mg(2+) as a cofactor. Post-translationally, phosphorylated at Thr-212 by STK11/LKB1 in complex with STE20-related adapter-alpha (STRADA) pseudo kinase and CAB39. Autophosphorylation is also possible at Thr-212. In terms of tissue distribution, expressed in liver, skin, testis, uterus, ovary, adrenal gland and brain (at protein level). Expressed in kidney, heart, skin, spleen, lung, uterus, liver and the exocrine and endocrine compartments of the human pancreas. A kinase-inactive isoform also appears to be expressed in the skin, spleen, lung, uterus, liver and testis.

The catalysed reaction is L-seryl-[protein] + ATP = O-phospho-L-seryl-[protein] + ADP + H(+). It catalyses the reaction L-threonyl-[protein] + ATP = O-phospho-L-threonyl-[protein] + ADP + H(+). Activated by phosphorylation on Thr-212 by STK11 in complex with STE20-related adapter-alpha (STRAD alpha) pseudo kinase and CAB39. Its function is as follows. Stress-activated kinase involved in tolerance to glucose starvation. Induces cell-cell detachment by increasing F-actin conversion to G-actin. Expression is induced by CD95 or TNF-alpha, via NF-kappa-B. Protects cells from CD95-mediated apoptosis and is required for the increased motility and invasiveness of CD95-activated tumor cells. Phosphorylates LATS1 and LATS2. Plays a key role in neural tube closure during embryonic development through LATS2 phosphorylation and regulation of the nuclear localization of YAP1 a critical downstream regulatory target in the Hippo signaling pathway. In Rattus norvegicus (Rat), this protein is NUAK family SNF1-like kinase 2.